We begin with the raw amino-acid sequence, 417 residues long: MGKETPAEKSLNLIRGRLCDPSYVFRPLSASSDSNYSKLKFIVSTSITEGCNNSMLLLGPRGSGKAAVLDLGVGDLLEQFPDSVSVIRLNGLLHSDDNCAFKEIAKQLCMEHHLLFSKMASFDDNSQFIIAMLRACGLAHKTIIFVLDEFDMFAQGKQRLLYSLLDAMQSVTSQAVVVGISSRLDADQLLEKRVRSRFSHRKFLFLPPSREELDGLFVHLLSLPADSGFPSGYVSRFNDKIKNLTSDTRFKDILKTLFNANSTVNSFLKFIFCAVSLMNLESGLLSLENFKAALSSMQRQPKLEAVRDCSVLELYLLVCMRRLEVKEQSSYNFISVMKEYKAIHDSFHTSDYYAQNVCLRAFEHLRERQVICYAENRGQSQTGEYRLQKLLISASELHQGMRSHACCPAILLKLLDH.

59 to 66 (GPRGSGKA) lines the ATP pocket.

Belongs to the ORC4 family. As to quaternary structure, component of the origin recognition complex (ORC) composed of at least ORC1 (ORC1A or ORC1B), ORC2, ORC3, ORC4, ORC5 and ORC6. ORC is regulated in a cell-cycle and development dependent manner. It is sequentially assembled at the exit from anaphase of mitosis and disassembled as cells enter S phase. Interacts directly with ORC1A, ORC2, ORC3, ORC5 and ORC6. As to expression, follow a cell-cycle regulation with a peak at the G1/S-phase. Isoform AtORC4a is expressed at low levels ubiquitously. Isoform AtORC4b is mostly expressed in siliques, flowers and flower buds, and, to a lower exent, in roots, leaves and stems.

It localises to the nucleus. Its function is as follows. Component of the origin recognition complex (ORC) that binds origins of replication. DNA-binding is ATP-dependent. The specific DNA sequences that define origins of replication have not been identified yet. ORC is required to assemble the pre-replication complex necessary to initiate DNA replication. The chain is Origin of replication complex subunit 4 from Arabidopsis thaliana (Mouse-ear cress).